We begin with the raw amino-acid sequence, 319 residues long: NADH-quinone oxidoreductase subunit H 1 (319 aa).

A run of 8 helical transmembrane segments spans residues 8–28, 74–94, 107–127, 147–167, 179–199, 230–250, 258–278, and 297–317; these read LFNIFGILGTLLTLAALLIWI, LVFILAPTVVVIATLLAFAVI, IGLLFFLAMSSLSVYSVVLGG, LSYEVFMGLSLMGVVMLAGTF, MWFCIPQFLGLVVFLIAGIAE, FFVGEYLAILLISALIVTLFF, LPPLVWFFIKFSFFVLFFILL, and LMLPLALLNLVITGAVVLALD.

The protein belongs to the complex I subunit 1 family. NDH-1 is composed of 14 different subunits. Subunits NuoA, H, J, K, L, M, N constitute the membrane sector of the complex.

It localises to the cell inner membrane. It catalyses the reaction a quinone + NADH + 5 H(+)(in) = a quinol + NAD(+) + 4 H(+)(out). NDH-1 shuttles electrons from NADH, via FMN and iron-sulfur (Fe-S) centers, to quinones in the respiratory chain. The immediate electron acceptor for the enzyme in this species is believed to be ubiquinone. Couples the redox reaction to proton translocation (for every two electrons transferred, four hydrogen ions are translocated across the cytoplasmic membrane), and thus conserves the redox energy in a proton gradient. This subunit may bind ubiquinone. This is NADH-quinone oxidoreductase subunit H 1 from Nitrosococcus oceani (strain ATCC 19707 / BCRC 17464 / JCM 30415 / NCIMB 11848 / C-107).